Consider the following 279-residue polypeptide: Probable endonuclease 4 (279 aa).

Zn(2+) contacts are provided by H69, H109, E145, D179, H182, H216, D229, H231, and E261.

Belongs to the AP endonuclease 2 family. Zn(2+) is required as a cofactor.

It carries out the reaction Endonucleolytic cleavage to 5'-phosphooligonucleotide end-products.. Functionally, endonuclease IV plays a role in DNA repair. It cleaves phosphodiester bonds at apurinic or apyrimidinic (AP) sites, generating a 3'-hydroxyl group and a 5'-terminal sugar phosphate. The chain is Probable endonuclease 4 from Chlorobium phaeovibrioides (strain DSM 265 / 1930) (Prosthecochloris vibrioformis (strain DSM 265)).